The sequence spans 128 residues: MTGYTPDEKLRLQQLRELRRRWLKDQELSPREPVLPPQKMGPMEKFWNKFLENKSPWRKMVHGVYKKSIFVFTHVLVPVWIIHYYMKYHVSEKPYGIVEKKSRIFPGDTILETGEVIPPMKEFPDQHH.

An N-acetylthreonine modification is found at T2. At K24 the chain carries N6-acetyllysine. A helical transmembrane segment spans residues 68–86 (SIFVFTHVLVPVWIIHYYM).

This sequence belongs to the complex I NDUFB6 subunit family. As to quaternary structure, complex I is composed of 45 different subunits.

It is found in the mitochondrion inner membrane. In terms of biological role, accessory subunit of the mitochondrial membrane respiratory chain NADH dehydrogenase (Complex I), that is believed not to be involved in catalysis. Complex I functions in the transfer of electrons from NADH to the respiratory chain. The immediate electron acceptor for the enzyme is believed to be ubiquinone. The sequence is that of NADH dehydrogenase [ubiquinone] 1 beta subcomplex subunit 6 (NDUFB6) from Pan troglodytes (Chimpanzee).